The following is a 423-amino-acid chain: Cyclin-dependent kinase 14 (423 aa).

S32, S49, and S88 each carry phosphoserine. The span at 49 to 64 shows a compositional bias: polar residues; sequence SENNACINFKTSSTGK. Residues 49–87 form a disordered region; sequence SENNACINFKTSSTGKESPKVRRHSSPSSPTSPKFGKAD. The Protein kinase domain maps to 89–373; sequence YEKLEKLGEG…AQAALSHEYF (285 aa). Residues 95–103 and K118 each bind ATP; that span reads LGEGSYATV. The active-site Proton acceptor is D210. A disordered region spans residues 403–423; that stretch reads ESMRAFGKNNSYGKSLSNSKH. Residues 410 to 423 are compositionally biased toward polar residues; it reads KNNSYGKSLSNSKH.

This sequence belongs to the protein kinase superfamily. CMGC Ser/Thr protein kinase family. CDC2/CDKX subfamily. In terms of assembly, found in a complex with LRP6, CCNY and CAPRIN2 during G2/M stage; CAPRIN2 functions as a scaffold for the complex by binding to CCNY via its N terminus and to CDK14 via its C terminus. Interacts with CCNY; CCNY mediates its recruitment to the plasma membrane and promotes phosphorylation of LRP6. Interacts with CCDN3 and CDKN1A. Interacts with SEPT8. Interacts with 14-3-3 proteina YWHAB, YWHAE, YWHAH and YWHAQ.

The protein localises to the cell membrane. It localises to the cytoplasm. It is found in the nucleus. The enzyme catalyses L-seryl-[protein] + ATP = O-phospho-L-seryl-[protein] + ADP + H(+). The catalysed reaction is L-threonyl-[protein] + ATP = O-phospho-L-threonyl-[protein] + ADP + H(+). Its activity is regulated as follows. Serine/threonine-protein kinase activity is promoted by associated cyclins CCDN3 and CCNY and repressed by CDKN1A. Its function is as follows. Serine/threonine-protein kinase involved in the control of the eukaryotic cell cycle, whose activity is controlled by an associated cyclin. Acts as a cell-cycle regulator of Wnt signaling pathway during G2/M phase by mediating the phosphorylation of LRP6 at 'Ser-1490', leading to the activation of the Wnt signaling pathway. Acts as a regulator of cell cycle progression and cell proliferation via its interaction with CCDN3. Phosphorylates RB1 in vitro, however the relevance of such result remains to be confirmed in vivo. May also play a role in meiosis, neuron differentiation and may indirectly act as a negative regulator of insulin-responsive glucose transport. In Callithrix jacchus (White-tufted-ear marmoset), this protein is Cyclin-dependent kinase 14 (CDK14).